The sequence spans 313 residues: MRTLSDAFIPELPGYYKGKVRENYDLADGRRIIIATDRLSAFDIILTSIPFKGEILTQTARYWFEETADICPNHVLEYPDPNVVVGTRLDILPVEIVVRGYLAGTTSTSILTRYRRGEREMYGMRLPDGLRDNEKLAAPVITPTSKAADGGHDEPLSRAEILAQGLLTQAQWDTVSDYALKLFARGQARAAERGLILADTKYEFGTDKNGTIILADEIHTPDSSRYWIAASYEQALASGTRPDSFDKDFIRSWVAARCDPYKDPIPRIPDEIVEQASRIYAQAYEAITGKAFVPDLSGDTVLDRIRSNLVRFF.

This sequence belongs to the SAICAR synthetase family.

It carries out the reaction 5-amino-1-(5-phospho-D-ribosyl)imidazole-4-carboxylate + L-aspartate + ATP = (2S)-2-[5-amino-1-(5-phospho-beta-D-ribosyl)imidazole-4-carboxamido]succinate + ADP + phosphate + 2 H(+). It participates in purine metabolism; IMP biosynthesis via de novo pathway; 5-amino-1-(5-phospho-D-ribosyl)imidazole-4-carboxamide from 5-amino-1-(5-phospho-D-ribosyl)imidazole-4-carboxylate: step 1/2. The sequence is that of Putative phosphoribosylaminoimidazole-succinocarboxamide synthase 2 (purC2) from Mesorhizobium japonicum (strain LMG 29417 / CECT 9101 / MAFF 303099) (Mesorhizobium loti (strain MAFF 303099)).